Consider the following 1085-residue polypeptide: Ankyrin repeat and IBR domain-containing protein 1 (1085 aa).

Gly-2 carries N-myristoyl glycine lipidation. 2 ANK repeats span residues 45–75 (QHNT…NPNK) and 145–174 (KKNT…DLFA). The segment at 282–322 (CQRSGVQMPTPPPSGYNAWDTLPSPRTPRTTRSSVTSPDEI) is disordered. Over residues 304–319 (PSPRTPRTTRSSVTSP) the composition is skewed to low complexity. Residues 330–570 (DTSLCDICMC…GGYYRCTRYE (241 aa)) are TRIAD supradomain. Residues Cys-334, Cys-337, Cys-352, His-354, Cys-357, Cys-360, Cys-379, Cys-384, Cys-466, Cys-469, His-474, Cys-479, Cys-520, and Cys-523 each coordinate Zn(2+). The RING-type 1 zinc finger occupies 334 to 384 (CDICMCSISVFEDPVDMPCGHDFCRGCWEAFLNLKIQEGEAHNIFCPAYEC). The IBR-type zinc finger occupies 402–479 (DKRYLQFDIK…LGEAHEPCDC (78 aa)). The RING-type 2; atypical zinc-finger motif lies at 520-549 (CANCKSPIQKNEGCNHMQCAKCKYDFCWIC). Cys-533 is an active-site residue. Positions 538, 541, 546, 549, 556, and 566 each coordinate Zn(2+). A coiled-coil region spans residues 576–641 (EEQSKEMTVE…RALKETEGGC (66 aa)). Ser-738 bears the Phosphoserine mark. Residues 764-808 (RRRHRQQRRRGDVHSLLSNPTDLDEPSESTFDLPEGSSGRRPGAS) are disordered. A UIM domain is found at 846 to 865 (EDDPNILLAIQLSLQESGLD). Phosphoserine is present on residues Ser-879 and Ser-906. Disordered stretches follow at residues 884–907 (GSSL…ALSS), 921–959 (GADS…QDPS), and 1014–1085 (PPED…VHSV). Residues 926 to 959 (PFSTDTLSSRPLSETRSDFCPSSSDLDSAGQDPS) show a composition bias toward polar residues. A compositionally biased stretch (basic and acidic residues) spans 1018–1033 (SVSKDTGVHEGERAQM). The span at 1068–1085 (ASQTPQTSSDWLEQVHSV) shows a compositional bias: polar residues.

It belongs to the RBR family.

It catalyses the reaction [E2 ubiquitin-conjugating enzyme]-S-ubiquitinyl-L-cysteine + [acceptor protein]-L-lysine = [E2 ubiquitin-conjugating enzyme]-L-cysteine + [acceptor protein]-N(6)-ubiquitinyl-L-lysine.. Functionally, might act as an E3 ubiquitin-protein ligase, or as part of E3 complex, which accepts ubiquitin from specific E2 ubiquitin-conjugating enzymes and then transfers it to substrates. This Mus musculus (Mouse) protein is Ankyrin repeat and IBR domain-containing protein 1 (Ankib1).